Reading from the N-terminus, the 148-residue chain is SPbeta prophage-derived uncharacterized protein YomK (148 aa).

Helical transmembrane passes span 72–92 (WGIG…LFGV) and 104–124 (NALI…RNII).

It is found in the cell membrane. This Bacillus subtilis (strain 168) protein is SPbeta prophage-derived uncharacterized protein YomK (yomK).